The sequence spans 1031 residues: Sodium/potassium-transporting ATPase subunit alpha (1031 aa).

The tract at residues 1–33 is disordered; the sequence is MADPGDLESRGKADSYSVAEKKSAPKKISKKNA. Positions 7-23 are enriched in basic and acidic residues; sequence LESRGKADSYSVAEKKS. Basic residues predominate over residues 24–33; sequence APKKISKKNA. 4 helical membrane-spanning segments follow: residues 102-123, 136-155, 297-319, and 326-354; these read MFGG…AFGI, LYLG…FSYY, FIHI…SLAM, and AIIF…TLTA. Residue D382 is the 4-aspartylphosphate intermediate of the active site. K512 is a binding site for ATP. Mg(2+)-binding residues include D725 and D729. The next 4 helical transmembrane spans lie at 795–818, 857–882, 924–944, and 961–986; these read ISPF…ILCI, LISL…IILA, LTCQ…DLII, and FLNF…NTGL.

It belongs to the cation transport ATPase (P-type) (TC 3.A.3) family. Type IIC subfamily. In terms of assembly, the sodium/potassium-transporting ATPase is composed of a catalytic alpha subunit, an auxiliary non-catalytic beta subunit and an additional regulatory subunit.

The protein localises to the cell membrane. The catalysed reaction is K(+)(out) + Na(+)(in) + ATP + H2O = K(+)(in) + Na(+)(out) + ADP + phosphate + H(+). With respect to regulation, this alpha subunit is resistant to ouabain. Functionally, this is the catalytic component of the active enzyme, which catalyzes the hydrolysis of ATP coupled with the exchange of sodium and potassium ions across the plasma membrane. This action creates the electrochemical gradient of sodium and potassium ions, providing the energy for active transport of various nutrients. This Hydra vulgaris (Hydra) protein is Sodium/potassium-transporting ATPase subunit alpha.